Here is a 545-residue protein sequence, read N- to C-terminus: Thermosome subunit alpha (545 aa).

The tract at residues 522–545 (KKSTPPSGQGGQGQGMPGGGMPEY) is disordered. The span at 529 to 545 (GQGGQGQGMPGGGMPEY) shows a compositional bias: gly residues.

This sequence belongs to the TCP-1 chaperonin family. As to quaternary structure, forms a Heterooligomeric complex of two stacked eight-membered rings. The N-terminus is blocked.

Molecular chaperone; binds unfolded polypeptides in vitro, and has a weak ATPase activity. The sequence is that of Thermosome subunit alpha (thsA) from Thermoplasma acidophilum (strain ATCC 25905 / DSM 1728 / JCM 9062 / NBRC 15155 / AMRC-C165).